A 226-amino-acid polypeptide reads, in one-letter code: PKHD-type hydroxylase Daci_1172 (226 aa).

One can recognise a Fe2OG dioxygenase domain in the interval 78 to 178 (KVLPPRFNRY…RYASFFWTHS (101 aa)). Fe cation-binding residues include His96, Asp98, and His159. Residue Arg169 participates in 2-oxoglutarate binding.

Fe(2+) is required as a cofactor. Requires L-ascorbate as cofactor.

This chain is PKHD-type hydroxylase Daci_1172, found in Delftia acidovorans (strain DSM 14801 / SPH-1).